The primary structure comprises 146 residues: Small ribosomal subunit protein eS17 (146 aa).

This sequence belongs to the eukaryotic ribosomal protein eS17 family. Component of the small ribosomal subunit (SSU). Mature N.crassa ribosomes consist of a small (40S) and a large (60S) subunit. The 40S small subunit contains 1 molecule of ribosomal RNA (18S rRNA) and at least 32 different proteins. The large 60S subunit contains 3 rRNA molecules (26S, 5.8S and 5S rRNA) and at least 42 different proteins.

The protein resides in the cytoplasm. Component of the ribosome, a large ribonucleoprotein complex responsible for the synthesis of proteins in the cell. The small ribosomal subunit (SSU) binds messenger RNAs (mRNAs) and translates the encoded message by selecting cognate aminoacyl-transfer RNA (tRNA) molecules. The large subunit (LSU) contains the ribosomal catalytic site termed the peptidyl transferase center (PTC), which catalyzes the formation of peptide bonds, thereby polymerizing the amino acids delivered by tRNAs into a polypeptide chain. The nascent polypeptides leave the ribosome through a tunnel in the LSU and interact with protein factors that function in enzymatic processing, targeting, and the membrane insertion of nascent chains at the exit of the ribosomal tunnel. The chain is Small ribosomal subunit protein eS17 (rps-17) from Neurospora crassa (strain ATCC 24698 / 74-OR23-1A / CBS 708.71 / DSM 1257 / FGSC 987).